The chain runs to 185 residues: Elongation factor P (185 aa).

The protein belongs to the elongation factor P family.

Its subcellular location is the cytoplasm. The protein operates within protein biosynthesis; polypeptide chain elongation. In terms of biological role, involved in peptide bond synthesis. Stimulates efficient translation and peptide-bond synthesis on native or reconstituted 70S ribosomes in vitro. Probably functions indirectly by altering the affinity of the ribosome for aminoacyl-tRNA, thus increasing their reactivity as acceptors for peptidyl transferase. The sequence is that of Elongation factor P from Streptococcus pyogenes serotype M4 (strain MGAS10750).